The following is a 101-amino-acid chain: Thrombin-like enzyme okinaxobin-1 (101 aa).

The first 16 residues, 1-16 (LIRVLANLLILQLSYA), serve as a signal peptide directing secretion. Residues 17–22 (QKSSEL) constitute a propeptide that is removed on maturation. The 79-residue stretch at 23–101 (VIGGDECNIN…PKKKYFFRCR (79 aa)) folds into the Peptidase S1 domain. Cys-50 and Cys-66 form a disulfide bridge. The active-site Charge relay system is the His-65.

The protein belongs to the peptidase S1 family. Snake venom subfamily. As to quaternary structure, monomer. Glycosylated. Expressed by the venom gland.

The protein localises to the secreted. Its activity is regulated as follows. Strongly inactivated by diisopropylfluorophosphate (DFP) and phenylmethanesulfonyl fluoride (PMSF), and to a lesser extent by tosyl-L-lysine chloromethyl ketone (TLCK). Thrombin-like snake venom serine protease that releases specifically fibrinopeptide B from fibrinogen (FGB) to form fibrin clots. Shows a preferential cleavage at Arg-|-Gly bonds in fibrinogen beta chains. Cleaves fibrinogen beta chains preferentially to alpha chains. The polypeptide is Thrombin-like enzyme okinaxobin-1 (Ovophis okinavensis (Ryukyu Island pit viper)).